We begin with the raw amino-acid sequence, 316 residues long: UDP-N-acetylenolpyruvoylglucosamine reductase (316 aa).

Positions 30–194 constitute an FAD-binding PCMH-type domain; sequence VGGEADYLVF…LSVKFALAPG (165 aa). Arginine 173 is a catalytic residue. Serine 223 (proton donor) is an active-site residue. Glutamate 293 is an active-site residue.

The protein belongs to the MurB family. It depends on FAD as a cofactor.

It localises to the cytoplasm. It catalyses the reaction UDP-N-acetyl-alpha-D-muramate + NADP(+) = UDP-N-acetyl-3-O-(1-carboxyvinyl)-alpha-D-glucosamine + NADPH + H(+). It functions in the pathway cell wall biogenesis; peptidoglycan biosynthesis. In terms of biological role, cell wall formation. This is UDP-N-acetylenolpyruvoylglucosamine reductase from Streptococcus pneumoniae serotype 19F (strain G54).